The sequence spans 214 residues: MTPPALTPRLLLRAYALGIFPMAESRDDPEIHWVDPRRRGIFPLDGFHISRSLARRIRRMDWTVTVNEDFAGTVRACADRDDTWINPTIFRLYVGLHALGHAHSLEVREGDALVGGVYGVTLGRAFFGESMFSRRTDASKVALAFLIDRLRAGGFTLFDTQFLTPHLASLGAIEIPRADYHRRLGEALAGKAEFAPPGYSPDPASVVQRSSQTS.

Residues 194 to 214 (FAPPGYSPDPASVVQRSSQTS) form a disordered region.

Belongs to the L/F-transferase family.

The protein localises to the cytoplasm. It catalyses the reaction N-terminal L-lysyl-[protein] + L-leucyl-tRNA(Leu) = N-terminal L-leucyl-L-lysyl-[protein] + tRNA(Leu) + H(+). The enzyme catalyses N-terminal L-arginyl-[protein] + L-leucyl-tRNA(Leu) = N-terminal L-leucyl-L-arginyl-[protein] + tRNA(Leu) + H(+). The catalysed reaction is L-phenylalanyl-tRNA(Phe) + an N-terminal L-alpha-aminoacyl-[protein] = an N-terminal L-phenylalanyl-L-alpha-aminoacyl-[protein] + tRNA(Phe). Functions in the N-end rule pathway of protein degradation where it conjugates Leu, Phe and, less efficiently, Met from aminoacyl-tRNAs to the N-termini of proteins containing an N-terminal arginine or lysine. The chain is Leucyl/phenylalanyl-tRNA--protein transferase from Cereibacter sphaeroides (strain ATCC 17025 / ATH 2.4.3) (Rhodobacter sphaeroides).